Consider the following 88-residue polypeptide: Class II hydrophobin 1 (88 aa).

The signal sequence occupies residues 1 to 15; it reads MKFFIATIFATGALA. Intrachain disulfides connect C19-C69, C29-C59, C30-C42, and C70-C81.

It belongs to the cerato-ulmin hydrophobin family. As to quaternary structure, homodimer. Homodimers further self-assemble to form highly ordered films at water-air interfaces through intermolecular interactions.

Its subcellular location is the secreted. It is found in the cell wall. Its function is as follows. Aerial growth, conidiation, and dispersal of filamentous fungi in the environment rely upon a capability of their secreting small amphipathic proteins called hydrophobins (HPBs) with low sequence identity. Class I can self-assemble into an outermost layer of rodlet bundles on aerial cell surfaces, conferring cellular hydrophobicity that supports fungal growth, development and dispersal; whereas Class II form highly ordered films at water-air interfaces through intermolecular interactions but contribute nothing to the rodlet structure. This Trichoderma asperellum (strain ATCC 204424 / CBS 433.97 / NBRC 101777) protein is Class II hydrophobin 1.